The primary structure comprises 270 residues: 3-phenylpropionate-dihydrodiol/cinnamic acid-dihydrodiol dehydrogenase (270 aa).

Phenylalanine 10 to alanine 34 lines the NAD(+) pocket. Residue serine 143 participates in substrate binding. Tyrosine 156 (proton acceptor) is an active-site residue.

This sequence belongs to the short-chain dehydrogenases/reductases (SDR) family.

It carries out the reaction 3-(cis-5,6-dihydroxycyclohexa-1,3-dien-1-yl)propanoate + NAD(+) = 3-(2,3-dihydroxyphenyl)propanoate + NADH + H(+). It catalyses the reaction (2E)-3-(cis-5,6-dihydroxycyclohexa-1,3-dien-1-yl)prop-2-enoate + NAD(+) = (2E)-3-(2,3-dihydroxyphenyl)prop-2-enoate + NADH + H(+). It participates in aromatic compound metabolism; 3-phenylpropanoate degradation. Converts 3-phenylpropionate-dihydrodiol (PP-dihydrodiol) and cinnamic acid-dihydrodiol (CI-dihydrodiol) into 3-(2,3-dihydroxylphenyl)propanoic acid (DHPP) and 2,3-dihydroxicinnamic acid (DHCI), respectively. This chain is 3-phenylpropionate-dihydrodiol/cinnamic acid-dihydrodiol dehydrogenase (hcaB), found in Escherichia coli.